Reading from the N-terminus, the 103-residue chain is Small ribosomal subunit protein uS10 (103 aa).

The protein belongs to the universal ribosomal protein uS10 family. As to quaternary structure, part of the 30S ribosomal subunit.

Involved in the binding of tRNA to the ribosomes. This chain is Small ribosomal subunit protein uS10, found in Desulfatibacillum aliphaticivorans.